The chain runs to 259 residues: uncharacterized protein (259 aa).

Positions 158–187 form a coiled coil; sequence VELHLKIIEEDMKETTKKNKEKKQNSQSQE. Residues 172 to 181 are compositionally biased toward basic and acidic residues; sequence TTKKNKEKKQ. Disordered regions lie at residues 172–197 and 217–240; these read TTKK…MEVS and PVKK…QLSK. Low complexity-rich tracts occupy residues 182–193 and 217–226; these read NSQSQEISNSIE and PVKKTSSASK.

This is an uncharacterized protein from Acanthamoeba polyphaga mimivirus (APMV).